A 221-amino-acid chain; its full sequence is Peroxiredoxin 2 (221 aa).

Positions proline 15–threonine 170 constitute a Thioredoxin domain. The active-site Cysteine sulfenic acid (-SOH) intermediate is cysteine 56. Residue arginine 133 coordinates substrate. Cysteine 211 and cysteine 217 form a disulfide bridge.

The protein belongs to the peroxiredoxin family. Prx6 subfamily. In terms of assembly, homodecamer. Pentamer of dimers that assemble into a ring structure.

The protein localises to the cytoplasm. The enzyme catalyses a hydroperoxide + [thioredoxin]-dithiol = an alcohol + [thioredoxin]-disulfide + H2O. Its function is as follows. Thiol-specific peroxidase that catalyzes the reduction of hydrogen peroxide and organic hydroperoxides to water and alcohols, respectively. Plays a role in cell protection against oxidative stress by detoxifying peroxides. The polypeptide is Peroxiredoxin 2 (Caldanaerobacter subterraneus subsp. tengcongensis (strain DSM 15242 / JCM 11007 / NBRC 100824 / MB4) (Thermoanaerobacter tengcongensis)).